The primary structure comprises 340 residues: Nitrilase (340 aa).

The region spanning 7–273 (IRAAAVQIAP…EGMVVADLDM (267 aa)) is the CN hydrolase domain. Glutamate 47 functions as the Proton acceptor in the catalytic mechanism. The active site involves lysine 129. Catalysis depends on cysteine 163, which acts as the Nucleophile.

This sequence belongs to the carbon-nitrogen hydrolase superfamily. Nitrilase family. Forms oligomers.

The catalysed reaction is a nitrile + 2 H2O = a carboxylate + NH4(+). It carries out the reaction phenylpropanonitrile + 2 H2O = 3-phenylpropanoate + NH4(+). The enzyme catalyses an aliphatic nitrile + 2 H2O = a carboxylate + NH4(+). Highly resistant to various miscible cosolvents and tolerates high substrate concentrations. Catalyzes the hydrolysis of a broad range of nitriles to yield their corresponding carboxylic acid and ammonia. In vitro, shows high activity toward benzylic/unsaturated nitriles. The preferred substrate is trans-cinnamonitrile, followed by mono/di-cyanopyridines and aromatic substituted nitriles, with a moderate activity toward 3-phenylpropionitrile. Shows weaker activity toward the common dinitrile fumaronitrile. Also shows weak activity toward some aliphatic nitriles, including adiponitrile and glutaronitrile, and the arylacetonitrile 2-thiopheneacetonitrile. The sequence is that of Nitrilase from Paraburkholderia phymatum (strain DSM 17167 / CIP 108236 / LMG 21445 / STM815) (Burkholderia phymatum).